A 92-amino-acid polypeptide reads, in one-letter code: Elongation factor 1-beta (92 aa).

It belongs to the EF-1-beta/EF-1-delta family.

Its function is as follows. Promotes the exchange of GDP for GTP in EF-1-alpha/GDP, thus allowing the regeneration of EF-1-alpha/GTP that could then be used to form the ternary complex EF-1-alpha/GTP/AAtRNA. This chain is Elongation factor 1-beta, found in Hyperthermus butylicus (strain DSM 5456 / JCM 9403 / PLM1-5).